The following is a 538-amino-acid chain: Interleukin-21 receptor (538 aa).

A signal peptide spans 1–19; the sequence is MPRGWAAPLLLLLLQGGWG. 3 cysteine pairs are disulfide-bonded: Cys-20–Cys-109, Cys-25–Cys-35, and Cys-65–Cys-81. At 20-232 the chain is on the extracellular side; it reads CPDLVCYTDY…FQTQSEELKE (213 aa). 2 consecutive Fibronectin type-III domains span residues 21–118 and 119–228; these read PDLV…AESI and KPAP…TQSE. 5 N-linked (GlcNAc...) asparagine glycosylation sites follow: Asn-73, Asn-97, Asn-104, Asn-125, and Asn-135. C-linked (Man) tryptophan glycosylation is present at Trp-214. The WSXWS motif motif lies at 214–218; it reads WSEWS. The helical transmembrane segment at 233–253 threads the bilayer; that stretch reads GWNPHLLLLLLLVIVFIPAFW. The Cytoplasmic segment spans residues 254 to 538; sequence SLKTHPLWRL…PLSSPGPQAS (285 aa). The Box 1 motif signature appears at 266-274; it reads KIWAVPSPE. Disordered stretches follow at residues 342-367 and 457-487; these read ESDG…SEER and EDWA…GLDM.

The protein belongs to the type I cytokine receptor family. Type 4 subfamily. In terms of assembly, heterodimer with the common gamma subunit. Associates with JAK1. C-mannosylated at Trp-214 in the WSXWS motif, the sugar chain makes extensive hydrogen bonds with Asn-73 sugar, and bridges the two fibronectin domains transforming the V-shaped receptor into an A-frame. Selectively expressed in lymphoid tissues. Most highly expressed in thymus and spleen.

The protein localises to the membrane. Functionally, this is a receptor for interleukin-21. This Homo sapiens (Human) protein is Interleukin-21 receptor (IL21R).